The sequence spans 137 residues: Small ribosomal subunit protein uS12 (137 aa).

A disordered region spans residues 1–57; that stretch reads MPTINQLVRKPRKSKVEKSKSPALNVGYNSLKRVPTNESAPQKRGVATRVGTMTPKK. Asp102 is modified (3-methylthioaspartic acid).

This sequence belongs to the universal ribosomal protein uS12 family. In terms of assembly, part of the 30S ribosomal subunit. Contacts proteins S8 and S17. May interact with IF1 in the 30S initiation complex.

Functionally, with S4 and S5 plays an important role in translational accuracy. In terms of biological role, interacts with and stabilizes bases of the 16S rRNA that are involved in tRNA selection in the A site and with the mRNA backbone. Located at the interface of the 30S and 50S subunits, it traverses the body of the 30S subunit contacting proteins on the other side and probably holding the rRNA structure together. The combined cluster of proteins S8, S12 and S17 appears to hold together the shoulder and platform of the 30S subunit. The sequence is that of Small ribosomal subunit protein uS12 from Streptococcus gordonii (strain Challis / ATCC 35105 / BCRC 15272 / CH1 / DL1 / V288).